We begin with the raw amino-acid sequence, 645 residues long: Alkyldihydroxyacetonephosphate synthase, peroxisomal (645 aa).

A compositionally biased stretch (low complexity) spans 1–10 (MAEAAAGEAG). A peroxisome-targeting transit peptide spans 1-45 (MAEAAAGEAGASERDPDAGRARRRLRVLSGHLLGRPQEAPSTNEC). Residues 1 to 72 (MAEAAAGEAG…AAPESGTIPK (72 aa)) are disordered. Residues 11-20 (ASERDPDAGR) show a composition bias toward basic and acidic residues. A compositionally biased stretch (low complexity) spans 50-69 (AASAAGASPAATPAAPESGT). A phosphoserine mark is found at Ser-52 and Ser-57. Residue Thr-61 is modified to Phosphothreonine. Lys-89 carries the post-translational modification N6-acetyllysine. An FAD-binding PCMH-type domain is found at 189-371 (FERIPDIVVW…TEATIKIRPT (183 aa)). FAD is bound by residues 221–227 (PIGGGTS), 290–296 (DSLEFST), and 303–306 (TRAS). N6-acetyllysine is present on Lys-334. 355–361 (EGTLGVI) contributes to the FAD binding site. Arg-502 serves as a coordination point for substrate. Catalysis depends on Tyr-565, which acts as the Proton donor/acceptor. Important for enzyme activity stretches follow at residues 602 to 604 (HHH) and 641 to 645 (NRNLL).

The protein belongs to the FAD-binding oxidoreductase/transferase type 4 family. Homodimer. Requires FAD as cofactor.

Its subcellular location is the peroxisome membrane. The protein localises to the peroxisome. It catalyses the reaction a long chain fatty alcohol + a 1-acylglycerone 3-phosphate = a 1-O-alkylglycerone 3-phosphate + a long-chain fatty acid + H(+). The catalysed reaction is hexadecan-1-ol + 1-hexadecanoylglycerone 3-phosphate = 1-O-hexadecylglycerone 3-phosphate + hexadecanoate + H(+). The enzyme catalyses 1-hexadecanoylglycerone 3-phosphate + a long-chain fatty acid = a 1-acylglycerone 3-phosphate + hexadecanoate. Its pathway is glycerolipid metabolism; ether lipid biosynthesis. Functionally, catalyzes the exchange of the acyl chain in acyl-dihydroxyacetonephosphate (acyl-DHAP) for a long chain fatty alcohol, yielding the first ether linked intermediate, i.e. alkyl-dihydroxyacetonephosphate (alkyl-DHAP), in the pathway of ether lipid biosynthesis. The protein is Alkyldihydroxyacetonephosphate synthase, peroxisomal (Agps) of Mus musculus (Mouse).